The following is an 800-amino-acid chain: Phenylalanine--tRNA ligase beta subunit (800 aa).

Residues 39–154 (TKDIKNLVVG…ESQVPGTDAL (116 aa)) form the tRNA-binding domain. The region spanning 408–483 (AFITPIDITA…RIYGYDDIPS (76 aa)) is the B5 domain. Residues Asp-461, Asp-467, Glu-470, and Glu-471 each contribute to the Mg(2+) site. The FDX-ACB domain maps to 708–800 (PRFPGMSRDI…ALIEQGAVIR (93 aa)).

Belongs to the phenylalanyl-tRNA synthetase beta subunit family. Type 1 subfamily. As to quaternary structure, tetramer of two alpha and two beta subunits. It depends on Mg(2+) as a cofactor.

The protein localises to the cytoplasm. The catalysed reaction is tRNA(Phe) + L-phenylalanine + ATP = L-phenylalanyl-tRNA(Phe) + AMP + diphosphate + H(+). The chain is Phenylalanine--tRNA ligase beta subunit from Staphylococcus aureus (strain Mu50 / ATCC 700699).